The following is a 132-amino-acid chain: uncharacterized protein (132 aa).

2 helical membrane passes run 12 to 32 and 37 to 57; these read VIGFVVLFCVLELVFYLKKLY and LTLAVFGIFSLLFFLLYIPVL.

Its subcellular location is the cell membrane. This is an uncharacterized protein from Methanocaldococcus jannaschii (strain ATCC 43067 / DSM 2661 / JAL-1 / JCM 10045 / NBRC 100440) (Methanococcus jannaschii).